The sequence spans 250 residues: Ribosomal RNA small subunit methyltransferase J (250 aa).

S-adenosyl-L-methionine-binding positions include 101–102 (RD), 117–118 (ER), 153–154 (SS), and Asp171.

It belongs to the methyltransferase superfamily. RsmJ family.

It localises to the cytoplasm. The catalysed reaction is guanosine(1516) in 16S rRNA + S-adenosyl-L-methionine = N(2)-methylguanosine(1516) in 16S rRNA + S-adenosyl-L-homocysteine + H(+). Specifically methylates the guanosine in position 1516 of 16S rRNA. This is Ribosomal RNA small subunit methyltransferase J from Shigella dysenteriae serotype 1 (strain Sd197).